The primary structure comprises 192 residues: Iron sulfur cluster assembly protein 1, mitochondrial (192 aa).

A mitochondrion-targeting transit peptide spans 1 to 53 (MSVFRRSVQCVGVLPSILAQRSSLLARPANLQFLKTNSSKFVPQVTANVSRRM).

This sequence belongs to the NifU family. Homodimer. Component of the core Fe-S cluster (ISC) assembly machinery. The cofactor is [2Fe-2S] cluster.

It localises to the mitochondrion. The protein localises to the mitochondrion matrix. It participates in cofactor biosynthesis; iron-sulfur cluster biosynthesis. Its function is as follows. Scaffold protein for the de novo synthesis of iron-sulfur (Fe-S) clusters within mitochondria, which is required for maturation of both mitochondrial and cytoplasmic [2Fe-2S] and [4Fe-4S] proteins. First, a [2Fe-2S] cluster is transiently assembled on the scaffold protein isu1. In a second step, the cluster is released from isu1, transferred to a glutaredoxin, followed by the formation of mitochondrial [2Fe-2S] proteins, the synthesis of [4Fe-4S] clusters and their target-specific insertion into the recipient apoproteins. Cluster assembly on isu1 depends on the function of the cysteine desulfurase complex nfs1-isd11, which serves as the sulfur donor for cluster synthesis, the iron-binding protein frataxin as the putative iron donor, and the electron transfer chain comprised of ferredoxin reductase and ferredoxin, which receive their electrons from NADH. The chain is Iron sulfur cluster assembly protein 1, mitochondrial (isu1) from Schizosaccharomyces pombe (strain 972 / ATCC 24843) (Fission yeast).